The chain runs to 111 residues: Ribosome-binding factor A (111 aa).

Belongs to the RbfA family. In terms of assembly, monomer. Binds 30S ribosomal subunits, but not 50S ribosomal subunits or 70S ribosomes.

The protein resides in the cytoplasm. One of several proteins that assist in the late maturation steps of the functional core of the 30S ribosomal subunit. Associates with free 30S ribosomal subunits (but not with 30S subunits that are part of 70S ribosomes or polysomes). Required for efficient processing of 16S rRNA. May interact with the 5'-terminal helix region of 16S rRNA. In Helicobacter pylori (strain Shi470), this protein is Ribosome-binding factor A.